The chain runs to 37 residues: Large ribosomal subunit protein bL36c (37 aa).

Belongs to the bacterial ribosomal protein bL36 family.

It is found in the plastid. It localises to the organellar chromatophore. This is Large ribosomal subunit protein bL36c from Paulinella chromatophora.